A 194-amino-acid chain; its full sequence is Holliday junction branch migration complex subunit RuvA (194 aa).

The tract at residues 1-63 (MFEYLKGTVA…EDELSLYGFM (63 aa)) is domain I. Positions 64–142 (SIEELDMFQK…KTNVVYDYTL (79 aa)) are domain II. The segment at 143–151 (FNDDHKDDD) is flexible linker. The interval 151–194 (DEAVQALMALGYSKLESEKAVEAVRDMSLGTEDVIKRALKWLMK) is domain III.

The protein belongs to the RuvA family. Homotetramer. Forms an RuvA(8)-RuvB(12)-Holliday junction (HJ) complex. HJ DNA is sandwiched between 2 RuvA tetramers; dsDNA enters through RuvA and exits via RuvB. An RuvB hexamer assembles on each DNA strand where it exits the tetramer. Each RuvB hexamer is contacted by two RuvA subunits (via domain III) on 2 adjacent RuvB subunits; this complex drives branch migration. In the full resolvosome a probable DNA-RuvA(4)-RuvB(12)-RuvC(2) complex forms which resolves the HJ.

It localises to the cytoplasm. Its function is as follows. The RuvA-RuvB-RuvC complex processes Holliday junction (HJ) DNA during genetic recombination and DNA repair, while the RuvA-RuvB complex plays an important role in the rescue of blocked DNA replication forks via replication fork reversal (RFR). RuvA specifically binds to HJ cruciform DNA, conferring on it an open structure. The RuvB hexamer acts as an ATP-dependent pump, pulling dsDNA into and through the RuvAB complex. HJ branch migration allows RuvC to scan DNA until it finds its consensus sequence, where it cleaves and resolves the cruciform DNA. The protein is Holliday junction branch migration complex subunit RuvA of Alkaliphilus oremlandii (strain OhILAs) (Clostridium oremlandii (strain OhILAs)).